The sequence spans 254 residues: tRNA pseudouridine synthase A (254 aa).

The active-site Nucleophile is aspartate 52. Residue tyrosine 110 participates in substrate binding.

Belongs to the tRNA pseudouridine synthase TruA family. Homodimer.

It carries out the reaction uridine(38/39/40) in tRNA = pseudouridine(38/39/40) in tRNA. Its function is as follows. Formation of pseudouridine at positions 38, 39 and 40 in the anticodon stem and loop of transfer RNAs. The chain is tRNA pseudouridine synthase A from Thermodesulfovibrio yellowstonii (strain ATCC 51303 / DSM 11347 / YP87).